A 626-amino-acid polypeptide reads, in one-letter code: Mitogen-activated protein kinase kinase kinase 3 (626 aa).

The region spanning 44 to 123 (DVRIKFEHNG…KSLRILLLSQ (80 aa)) is the PB1 domain. Disordered regions lie at residues 125-184 (RNHT…YVPE) and 218-273 (SSAE…VKGG). Polar residues-rich tracts occupy residues 128 to 137 (TSSSPHSGVS), 144 to 155 (PSQSAGDINTIY), 165 to 174 (LSVSSQNPGR), and 219 to 247 (SAEN…QMSR). Residues Ser147 and Ser166 each carry the phosphoserine modification. Ser250 and Ser312 each carry phosphoserine. Positions 250–270 (SFPDNRKECSDRETQLYDKGV) are enriched in basic and acidic residues. Ser337 bears the Phosphoserine; by SGK1 mark. Ser340 carries the post-translational modification Phosphoserine. Residues 362–622 (WRRGKLLGQG…AEELLTHHFA (261 aa)) enclose the Protein kinase domain. Residues 368-376 (LGQGAFGRV) and Lys391 each bind ATP. The active-site Proton acceptor is the Asp489.

It belongs to the protein kinase superfamily. STE Ser/Thr protein kinase family. MAP kinase kinase kinase subfamily. As to quaternary structure, binds both upstream activators and downstream substrates in multimolecular complexes. Part of a complex with MAP2K3, RAC1 and CCM2. Interacts with MAP2K5 and SPAG9. It depends on Mg(2+) as a cofactor. Phosphorylation at Ser-166 and Ser-337 by SGK1 inhibits its activity.

It carries out the reaction L-seryl-[protein] + ATP = O-phospho-L-seryl-[protein] + ADP + H(+). The catalysed reaction is L-threonyl-[protein] + ATP = O-phospho-L-threonyl-[protein] + ADP + H(+). With respect to regulation, activated by phosphorylation on Thr-530. Its function is as follows. Component of a protein kinase signal transduction cascade. Mediates activation of the NF-kappa-B, AP1 and DDIT3 transcriptional regulators. This chain is Mitogen-activated protein kinase kinase kinase 3 (Map3k3), found in Mus musculus (Mouse).